Here is a 166-residue protein sequence, read N- to C-terminus: Large ribosomal subunit protein uL10 (166 aa).

The protein belongs to the universal ribosomal protein uL10 family. As to quaternary structure, part of the ribosomal stalk of the 50S ribosomal subunit. The N-terminus interacts with L11 and the large rRNA to form the base of the stalk. The C-terminus forms an elongated spine to which L12 dimers bind in a sequential fashion forming a multimeric L10(L12)X complex.

Forms part of the ribosomal stalk, playing a central role in the interaction of the ribosome with GTP-bound translation factors. The sequence is that of Large ribosomal subunit protein uL10 from Aromatoleum aromaticum (strain DSM 19018 / LMG 30748 / EbN1) (Azoarcus sp. (strain EbN1)).